A 278-amino-acid polypeptide reads, in one-letter code: 4-deoxy-L-threo-5-hexosulose-uronate ketol-isomerase (278 aa).

Residues His196, His198, Glu203, and His245 each contribute to the Zn(2+) site.

Belongs to the KduI family. The cofactor is Zn(2+).

It catalyses the reaction 5-dehydro-4-deoxy-D-glucuronate = 3-deoxy-D-glycero-2,5-hexodiulosonate. The protein operates within glycan metabolism; pectin degradation; 2-dehydro-3-deoxy-D-gluconate from pectin: step 4/5. In terms of biological role, catalyzes the isomerization of 5-dehydro-4-deoxy-D-glucuronate to 3-deoxy-D-glycero-2,5-hexodiulosonate. This is 4-deoxy-L-threo-5-hexosulose-uronate ketol-isomerase from Shigella sonnei (strain Ss046).